A 331-amino-acid chain; its full sequence is Putative heme-binding peroxidase (331 aa).

His50 serves as the catalytic Proton acceptor. His174 is a binding site for heme b. Catalysis depends on Trp190, which acts as the Tryptophan radical intermediate. Residues 288 to 331 are disordered; the sequence is INTDNQKGGYRSAPKKSDSTPATSGQPGASKTGGCPVMHHKAKL. Residues 306 to 316 are compositionally biased toward polar residues; that stretch reads STPATSGQPGA.

Belongs to the peroxidase family. Cytochrome c peroxidase subfamily. It depends on heme b as a cofactor.

In terms of biological role, destroys radicals which are normally produced within the cells and which are toxic to biological systems. The chain is Putative heme-binding peroxidase from Gibberella zeae (strain ATCC MYA-4620 / CBS 123657 / FGSC 9075 / NRRL 31084 / PH-1) (Wheat head blight fungus).